Consider the following 300-residue polypeptide: Nucleotide-binding protein Daci_5422 (300 aa).

Residue 10 to 17 (GMSGSGKS) participates in ATP binding. A GTP-binding site is contributed by 59-62 (DARS).

This sequence belongs to the RapZ-like family.

In terms of biological role, displays ATPase and GTPase activities. This chain is Nucleotide-binding protein Daci_5422, found in Delftia acidovorans (strain DSM 14801 / SPH-1).